A 95-amino-acid polypeptide reads, in one-letter code: Small ribosomal subunit protein bS18 (95 aa).

The protein belongs to the bacterial ribosomal protein bS18 family. Part of the 30S ribosomal subunit. Forms a tight heterodimer with protein bS6.

In terms of biological role, binds as a heterodimer with protein bS6 to the central domain of the 16S rRNA, where it helps stabilize the platform of the 30S subunit. The sequence is that of Small ribosomal subunit protein bS18 from Ehrlichia canis (strain Jake).